A 462-amino-acid chain; its full sequence is tRNA-2-methylthio-N(6)-dimethylallyladenosine synthase (462 aa).

One can recognise an MTTase N-terminal domain in the interval 1–116 (MKLFIQTLGC…ITQVLERPKA (116 aa)). [4Fe-4S] cluster contacts are provided by Cys10, Cys47, Cys79, Cys148, Cys152, and Cys155. Residues 134-370 (QGMGIKAHLN…NLHKEILSKK (237 aa)) enclose the Radical SAM core domain. The 65-residue stretch at 372 to 436 (QLEIGRIHNV…GGGLMGRFIN (65 aa)) folds into the TRAM domain.

The protein belongs to the methylthiotransferase family. MiaB subfamily. Monomer. [4Fe-4S] cluster is required as a cofactor.

It localises to the cytoplasm. It carries out the reaction N(6)-dimethylallyladenosine(37) in tRNA + (sulfur carrier)-SH + AH2 + 2 S-adenosyl-L-methionine = 2-methylsulfanyl-N(6)-dimethylallyladenosine(37) in tRNA + (sulfur carrier)-H + 5'-deoxyadenosine + L-methionine + A + S-adenosyl-L-homocysteine + 2 H(+). In terms of biological role, catalyzes the methylthiolation of N6-(dimethylallyl)adenosine (i(6)A), leading to the formation of 2-methylthio-N6-(dimethylallyl)adenosine (ms(2)i(6)A) at position 37 in tRNAs that read codons beginning with uridine. The sequence is that of tRNA-2-methylthio-N(6)-dimethylallyladenosine synthase from Helicobacter hepaticus (strain ATCC 51449 / 3B1).